The following is a 480-amino-acid chain: MNFETVIGLEVHVELNTNSKIFSPTSAHFGNDQNANTNVIDWSFPGVLPVLNKGVVDAGIKAALALNMDIHKKMHFDRKNYFYPDNPKAYQISQFDEPIGYNGWIEVKLEDGTTKKIGIERAHLEEDAGKNTHGTDGYSYVDLNRQGVPLIEIVSEADMRSPEEAYAYLTALKEVIQYAGISDVKMEEGSMRVDANISLRPYGQEKFGTKTELKNLNSFSNVRKGLEYEVQRQAEILRSGGQIRQETRRYDEANKATILMRVKEGAADYRYFPEPDLPLFEISDEWIEEMRTELPEFPKERRARYVSDLGLSDYDASQLTANKVTSDFFEKAVALGGDAKQVSNWLQGEVAQFLNAEGKTLEQIELTPENLVEMIAIIEDGTISSKIAKKVFVHLAKNGGGAREYVEKAGMVQISDPAILIPIIHQVFADNEAAVADFKSGKRNADKAFTGFLMKATKGQANPQVALKLLAQELAKLKEN.

Belongs to the GatB/GatE family. GatB subfamily. Heterotrimer of A, B and C subunits.

The enzyme catalyses L-glutamyl-tRNA(Gln) + L-glutamine + ATP + H2O = L-glutaminyl-tRNA(Gln) + L-glutamate + ADP + phosphate + H(+). The catalysed reaction is L-aspartyl-tRNA(Asn) + L-glutamine + ATP + H2O = L-asparaginyl-tRNA(Asn) + L-glutamate + ADP + phosphate + 2 H(+). In terms of biological role, allows the formation of correctly charged Asn-tRNA(Asn) or Gln-tRNA(Gln) through the transamidation of misacylated Asp-tRNA(Asn) or Glu-tRNA(Gln) in organisms which lack either or both of asparaginyl-tRNA or glutaminyl-tRNA synthetases. The reaction takes place in the presence of glutamine and ATP through an activated phospho-Asp-tRNA(Asn) or phospho-Glu-tRNA(Gln). In Streptococcus pneumoniae serotype 4 (strain ATCC BAA-334 / TIGR4), this protein is Aspartyl/glutamyl-tRNA(Asn/Gln) amidotransferase subunit B.